A 425-amino-acid polypeptide reads, in one-letter code: UDP-N-acetylglucosamine 1-carboxyvinyltransferase (425 aa).

25–26 (KN) lines the phosphoenolpyruvate pocket. R95 serves as a coordination point for UDP-N-acetyl-alpha-D-glucosamine. C119 functions as the Proton donor in the catalytic mechanism. Residue C119 is modified to 2-(S-cysteinyl)pyruvic acid O-phosphothioketal. Residues 124–128 (RPVDQ), D306, and I328 contribute to the UDP-N-acetyl-alpha-D-glucosamine site.

The protein belongs to the EPSP synthase family. MurA subfamily.

The protein resides in the cytoplasm. The enzyme catalyses phosphoenolpyruvate + UDP-N-acetyl-alpha-D-glucosamine = UDP-N-acetyl-3-O-(1-carboxyvinyl)-alpha-D-glucosamine + phosphate. Its pathway is cell wall biogenesis; peptidoglycan biosynthesis. Its function is as follows. Cell wall formation. Adds enolpyruvyl to UDP-N-acetylglucosamine. The chain is UDP-N-acetylglucosamine 1-carboxyvinyltransferase from Thermus thermophilus (strain ATCC BAA-163 / DSM 7039 / HB27).